A 256-amino-acid chain; its full sequence is Myeloblastin (256 aa).

An N-terminal signal peptide occupies residues 1 to 25; that stretch reads MAHRPPSPALASVLLALLLSGAARA. Residues 26–27 constitute a propeptide that is removed on maturation; it reads AE. In terms of domain architecture, Peptidase S1 spans 28 to 248; sequence IVGGHEAQPH…YVDWIRSTLR (221 aa). The cysteines at positions 56 and 72 are disulfide-linked. Catalysis depends on charge relay system residues His71 and Asp118. N-linked (GlcNAc...) asparagine glycans are attached at residues Asn129 and Asn174. 3 disulfide bridges follow: Cys152–Cys209, Cys182–Cys188, and Cys199–Cys224. The active-site Charge relay system is the Ser203. Residues 249–256 constitute a propeptide that is removed on maturation; sequence RVEAKGRP.

The protein belongs to the peptidase S1 family. Elastase subfamily. In terms of assembly, may form dimers. Interacts with CD177; the interaction tethers PRTN3 to the cell surface; the interaction is direct. Interacts with SERPINB1. Interacts with ADGRG3. As to expression, expressed in polymorphonuclear leukocytes (at protein level). Expressed in neutrophils (at protein level). Expressed in differentiating neutrophils.

It localises to the cytoplasmic granule. The protein resides in the secreted. Its subcellular location is the cell membrane. It is found in the membrane raft. It catalyses the reaction Hydrolysis of proteins, including elastin, by preferential cleavage: -Ala-|-Xaa- &gt; -Val-|-Xaa-.. Inhibited by phenylmethanesulfonyl fluoride (PMSF) and diisopropyl fluorophosphate (DFP). Its function is as follows. Serine protease that degrades elastin, fibronectin, laminin, vitronectin, and collagen types I, III, and IV (in vitro). By cleaving and activating receptor F2RL1/PAR-2, enhances endothelial cell barrier function and thus vascular integrity during neutrophil transendothelial migration. Plays a role in neutrophil transendothelial migration, probably when associated with CD177. Triggers inflammatory processes in neutrophils by interacting with ADGRG3 upstream of F2RL1/PAR2 activation. The sequence is that of Myeloblastin (PRTN3) from Homo sapiens (Human).